A 344-amino-acid polypeptide reads, in one-letter code: Protein pelota homolog (344 aa).

It belongs to the eukaryotic release factor 1 family. Pelota subfamily. Monomer. A divalent metal cation is required as a cofactor.

It is found in the cytoplasm. Functionally, may function in recognizing stalled ribosomes, interact with stem-loop structures in stalled mRNA molecules, and effect endonucleolytic cleavage of the mRNA. May play a role in the release non-functional ribosomes and degradation of damaged mRNAs. Has endoribonuclease activity. The chain is Protein pelota homolog from Saccharolobus islandicus (strain Y.N.15.51 / Yellowstone #2) (Sulfolobus islandicus).